The primary structure comprises 152 residues: Ribosomal RNA large subunit methyltransferase H (152 aa).

S-adenosyl-L-methionine-binding positions include leucine 70, glycine 101, and 120–125 (LSDLTF).

The protein belongs to the RNA methyltransferase RlmH family. As to quaternary structure, homodimer.

It is found in the cytoplasm. It catalyses the reaction pseudouridine(1915) in 23S rRNA + S-adenosyl-L-methionine = N(3)-methylpseudouridine(1915) in 23S rRNA + S-adenosyl-L-homocysteine + H(+). Its function is as follows. Specifically methylates the pseudouridine at position 1915 (m3Psi1915) in 23S rRNA. This Pseudothermotoga lettingae (strain ATCC BAA-301 / DSM 14385 / NBRC 107922 / TMO) (Thermotoga lettingae) protein is Ribosomal RNA large subunit methyltransferase H.